We begin with the raw amino-acid sequence, 276 residues long: MIKLGSHVSFKAPDYLCGAIKESLDNGANCAMIYLGPPQNSTRISVEKYHYEDYLAKYSSQIKAEDIVVHAPYIVNLANRSKQEFAIDFLVAECQRANYIGIKYLVLHPGFHNNLYPVKEALDILVFGLKKILEQTKDITICLETMAGKGSEICSNFEDIKYVIDQVNNDRVAMCLDTCHIWDAGYNIKDYDAFKKYLIDNDYLKLIKVIHLNDSLNDRASHKDRHANIDKGYIKLETLKRFVHDKDFDNIPIILETPRTKDWSPYKDEIKTLLAK.

Residues His-70, His-108, Glu-144, Asp-177, His-180, His-211, Asp-224, His-226, and Glu-256 each contribute to the Zn(2+) site.

Belongs to the AP endonuclease 2 family. It depends on Zn(2+) as a cofactor.

It catalyses the reaction Endonucleolytic cleavage to 5'-phosphooligonucleotide end-products.. In terms of biological role, endonuclease IV plays a role in DNA repair. It cleaves phosphodiester bonds at apurinic or apyrimidinic (AP) sites, generating a 3'-hydroxyl group and a 5'-terminal sugar phosphate. This chain is Probable endonuclease 4, found in Metamycoplasma arthritidis (strain 158L3-1) (Mycoplasma arthritidis).